Consider the following 416-residue polypeptide: Histidinol dehydrogenase (416 aa).

NAD(+) is bound by residues Y117, Q178, and N201. Residues T224, Q246, and H249 each coordinate substrate. Zn(2+) is bound by residues Q246 and H249. Active-site proton acceptor residues include E314 and H315. Substrate contacts are provided by H315, D348, E402, and H407. Residue D348 coordinates Zn(2+). H407 is a Zn(2+) binding site.

Belongs to the histidinol dehydrogenase family. Requires Zn(2+) as cofactor.

The enzyme catalyses L-histidinol + 2 NAD(+) + H2O = L-histidine + 2 NADH + 3 H(+). Its pathway is amino-acid biosynthesis; L-histidine biosynthesis; L-histidine from 5-phospho-alpha-D-ribose 1-diphosphate: step 9/9. Its function is as follows. Catalyzes the sequential NAD-dependent oxidations of L-histidinol to L-histidinaldehyde and then to L-histidine. This chain is Histidinol dehydrogenase, found in Staphylococcus aureus (strain bovine RF122 / ET3-1).